The following is a 615-amino-acid chain: Homologous recombination OB-fold protein (615 aa).

Disordered stretches follow at residues 42-75, 213-326, and 546-590; these read LRPVSSRPQETVQTQSSRPVPSYPTSNQSVPRLC, PWPS…PVTQ, and DFLE…FPEE. S47 carries the phosphoserine modification. Polar residues-rich tracts occupy residues 47 to 71, 232 to 241, and 257 to 275; these read SRPQETVQTQSSRPVPSYPTSNQSV, SCVSTSQQRG, and IRSSPQNYGPGQPLQSPRA. Positions 302 to 317 are enriched in low complexity; that stretch reads SSRAPVSSVESPVSTP.

As to quaternary structure, interacts with MCM8; this interaction is necessary for MCM8-MCM9 helicase complex recruitment to DNA damage sites. Interacts with RPA1; this interaction associates HROB with the RPA complex.

It localises to the nucleus. It is found in the chromosome. Functionally, DNA-binding protein involved in homologous recombination that acts by recruiting the MCM8-MCM9 helicase complex to sites of DNA damage to promote DNA repair synthesis. The chain is Homologous recombination OB-fold protein from Mus musculus (Mouse).